We begin with the raw amino-acid sequence, 43 residues long: Protein PsbN (43 aa).

Residues 5–27 (TLVAIFISGSLVSFTGYALYTAF) traverse the membrane as a helical segment.

Belongs to the PsbN family.

Its subcellular location is the plastid. It is found in the chloroplast thylakoid membrane. In terms of biological role, may play a role in photosystem I and II biogenesis. The chain is Protein PsbN from Nelumbo lutea (American lotus).